The following is a 326-amino-acid chain: tRNA dimethylallyltransferase (326 aa).

10 to 17 (GPTGTGKT) contacts ATP. 12–17 (TGTGKT) is a substrate binding site. The tract at residues 35–38 (DSMQ) is interaction with substrate tRNA.

This sequence belongs to the IPP transferase family. In terms of assembly, monomer. Requires Mg(2+) as cofactor.

The enzyme catalyses adenosine(37) in tRNA + dimethylallyl diphosphate = N(6)-dimethylallyladenosine(37) in tRNA + diphosphate. In terms of biological role, catalyzes the transfer of a dimethylallyl group onto the adenine at position 37 in tRNAs that read codons beginning with uridine, leading to the formation of N6-(dimethylallyl)adenosine (i(6)A). The protein is tRNA dimethylallyltransferase of Dictyoglomus turgidum (strain DSM 6724 / Z-1310).